A 251-amino-acid polypeptide reads, in one-letter code: MPRYKLTVEYDGTPYVGWQRQENGHAVQNAIELAFKKFCGEDLTLSAAGRTDAGVHATAQVVHVDLTKDWGAGKVRDAVNAHLVMADERVSILNVERTTDTFDARFSARARHYLYRIHNRRAPLAVDYQRAWWVQKRLDAEAMHEAAKRLLGEHDFTTFRATQCQAKSPVKTLDRLDVIRNGDYVEMRVSARSFLHNQVRSFAGSLMEVGVGRWTADDLQAALEAKDRKACGQVAPPYGLYLIGVDYAFPY.

Catalysis depends on Asp-52, which acts as the Nucleophile. Tyr-113 contributes to the substrate binding site.

This sequence belongs to the tRNA pseudouridine synthase TruA family. As to quaternary structure, homodimer.

It carries out the reaction uridine(38/39/40) in tRNA = pseudouridine(38/39/40) in tRNA. Formation of pseudouridine at positions 38, 39 and 40 in the anticodon stem and loop of transfer RNAs. The sequence is that of tRNA pseudouridine synthase A from Brucella anthropi (strain ATCC 49188 / DSM 6882 / CCUG 24695 / JCM 21032 / LMG 3331 / NBRC 15819 / NCTC 12168 / Alc 37) (Ochrobactrum anthropi).